Reading from the N-terminus, the 209-residue chain is Small ribosomal subunit protein uS4 (209 aa).

The span at 1 to 13 shows a compositional bias: basic residues; that stretch reads MSTKSRTRSKTRL. Disordered regions lie at residues 1–20 and 28–49; these read MSTK…LGIP and YLEK…QDSD. Residues 95–160 form the S4 RNA-binding domain; the sequence is QRLDALVVRS…TEPFQVAAAG (66 aa).

Belongs to the universal ribosomal protein uS4 family. Part of the 30S ribosomal subunit. Contacts protein S5. The interaction surface between S4 and S5 is involved in control of translational fidelity.

Its function is as follows. One of the primary rRNA binding proteins, it binds directly to 16S rRNA where it nucleates assembly of the body of the 30S subunit. In terms of biological role, with S5 and S12 plays an important role in translational accuracy. The polypeptide is Small ribosomal subunit protein uS4 (Clavibacter sepedonicus (Clavibacter michiganensis subsp. sepedonicus)).